Here is a 317-residue protein sequence, read N- to C-terminus: Sulfate adenylyltransferase subunit 2 (317 aa).

Residues 1–10 (MSNAVHETDS) show a composition bias toward basic and acidic residues. Disordered regions lie at residues 1-21 (MSNA…PPLD) and 298-317 (RAID…EGYF).

Belongs to the PAPS reductase family. CysD subfamily. As to quaternary structure, heterodimer composed of CysD, the smaller subunit, and CysN.

It catalyses the reaction sulfate + ATP + H(+) = adenosine 5'-phosphosulfate + diphosphate. The protein operates within sulfur metabolism; hydrogen sulfide biosynthesis; sulfite from sulfate: step 1/3. Functionally, with CysN forms the ATP sulfurylase (ATPS) that catalyzes the adenylation of sulfate producing adenosine 5'-phosphosulfate (APS) and diphosphate, the first enzymatic step in sulfur assimilation pathway. APS synthesis involves the formation of a high-energy phosphoric-sulfuric acid anhydride bond driven by GTP hydrolysis by CysN coupled to ATP hydrolysis by CysD. The polypeptide is Sulfate adenylyltransferase subunit 2 (Agrobacterium fabrum (strain C58 / ATCC 33970) (Agrobacterium tumefaciens (strain C58))).